Reading from the N-terminus, the 837-residue chain is Mannosyl-oligosaccharide glucosidase (837 aa).

The span at 1–10 (MARGERRRRA) shows a compositional bias: basic residues. The Cytoplasmic segment spans residues 1-38 (MARGERRRRAVPAEGVRTAERAARGGPGRRDGRGGGPR). The interval 1 to 39 (MARGERRRRAVPAEGVRTAERAARGGPGRRDGRGGGPRS) is disordered. Positions 3–9 (RGERRRR) match the Endoplasmic reticulum targeting motif. A compositionally biased stretch (basic and acidic residues) spans 17–33 (RTAERAARGGPGRRDGR). Residues 39-59 (STAGGVALAVVVLSLALGMSG) form a helical; Signal-anchor for type II membrane protein membrane-spanning segment. Residues 60 to 837 (RWVLAWYRAR…LVLLAMAEDY (778 aa)) are Lumenal-facing. Positions 76–137 (SAPPVLPADS…PGTPKLRHTC (62 aa)) are required for endoplasmic reticulum targeting. Residue D583 is the Proton donor of the active site. A glycan (N-linked (GlcNAc...) asparagine) is linked at N657. Catalysis depends on E807, which acts as the Proton acceptor.

This sequence belongs to the glycosyl hydrolase 63 family.

The protein resides in the endoplasmic reticulum membrane. It catalyses the reaction N(4)-(alpha-D-Glc-(1-&gt;2)-alpha-D-Glc-(1-&gt;3)-alpha-D-Glc-(1-&gt;3)-alpha-D-Man-(1-&gt;2)-alpha-D-Man-(1-&gt;2)-alpha-D-Man-(1-&gt;3)-[alpha-D-Man-(1-&gt;2)-alpha-D-Man-(1-&gt;3)-[alpha-D-Man-(1-&gt;2)-alpha-D-Man-(1-&gt;6)]-alpha-D-Man-(1-&gt;6)]-beta-D-Man-(1-&gt;4)-beta-D-GlcNAc-(1-&gt;4)-beta-D-GlcNAc)-L-asparaginyl-[protein] + H2O = N(4)-(alpha-D-Glc-(1-&gt;3)-alpha-D-Glc-(1-&gt;3)-alpha-D-Man-(1-&gt;2)-alpha-D-Man-(1-&gt;2)-alpha-D-Man-(1-&gt;3)-[alpha-D-Man-(1-&gt;2)-alpha-D-Man-(1-&gt;3)-[alpha-D-Man-(1-&gt;2)-alpha-D-Man-(1-&gt;6)]-alpha-D-Man-(1-&gt;6)]-beta-D-Man-(1-&gt;4)-beta-D-GlcNAc-(1-&gt;4)-beta-D-GlcNAc)-L-asparaginyl-[protein] + beta-D-glucose. Its pathway is glycan metabolism; N-glycan degradation. Its activity is regulated as follows. Inhibited by 1-deoxynojirimycin (40% inhibition) and N,N-dimethyl-deoxynojirimycin (85% inhibition). Its function is as follows. In the context of N-glycan degradation, cleaves the distal alpha 1,2-linked glucose residue from the Glc(3)Man(9)GlcNAc(2) oligosaccharide precursor in a highly specific manner. The protein is Mannosyl-oligosaccharide glucosidase of Homo sapiens (Human).